A 106-amino-acid chain; its full sequence is Large ribosomal subunit protein eL42 (106 aa).

This sequence belongs to the eukaryotic ribosomal protein eL42 family. In terms of assembly, component of the large ribosomal subunit.

The protein resides in the cytoplasm. In terms of biological role, component of the large ribosomal subunit. The ribosome is a large ribonucleoprotein complex responsible for the synthesis of proteins in the cell. In Papio anubis (Olive baboon), this protein is Large ribosomal subunit protein eL42 (RPL36A).